The sequence spans 264 residues: Virulence plasmid protein pGP3-D (264 aa).

This chain is Virulence plasmid protein pGP3-D, found in Chlamydia muridarum (strain MoPn / Nigg).